Reading from the N-terminus, the 359-residue chain is 3-dehydroquinate synthase (359 aa).

NAD(+)-binding positions include 71–76 (DGEQYK), 105–109 (GVIGD), 129–130 (TT), Lys-142, Lys-151, and 169–172 (CLAT). Residues Glu-184, His-247, and His-264 each contribute to the Zn(2+) site.

The protein belongs to the sugar phosphate cyclases superfamily. Dehydroquinate synthase family. It depends on Co(2+) as a cofactor. Requires Zn(2+) as cofactor. NAD(+) serves as cofactor.

The protein localises to the cytoplasm. It carries out the reaction 7-phospho-2-dehydro-3-deoxy-D-arabino-heptonate = 3-dehydroquinate + phosphate. It participates in metabolic intermediate biosynthesis; chorismate biosynthesis; chorismate from D-erythrose 4-phosphate and phosphoenolpyruvate: step 2/7. Its function is as follows. Catalyzes the conversion of 3-deoxy-D-arabino-heptulosonate 7-phosphate (DAHP) to dehydroquinate (DHQ). This chain is 3-dehydroquinate synthase, found in Baumannia cicadellinicola subsp. Homalodisca coagulata.